The chain runs to 1195 residues: Protein PIP82 (1195 aa).

Residues 1–10 (MSHQEQQFQH) are compositionally biased toward low complexity. 9 disordered regions span residues 1–55 (MSHQ…IGSS), 85–132 (KLRG…SQQF), 291–471 (NTFD…TANL), 493–515 (KVAKEPEELETKAEGSATGGASG), 544–567 (QRNANNQNATTSKQPKPNTVGHEP), 613–637 (EEDNEEDHSQDQTKRGQSSVSGIAT), 702–771 (MSPV…IVPK), 833–977 (SAGS…VKTS), and 1060–1195 (QITV…VVEI). Basic residues predominate over residues 11 to 26 (YPHHQHHHHHHHHHIH). Basic and acidic residues predominate over residues 37-50 (RSSDLEPNRSRNTD). The span at 109–118 (GSAKDGAGAA) shows a compositional bias: low complexity. The segment covering 119 to 132 (QQTHLQVAGQSQQF) has biased composition (polar residues). Residues 300–313 (HEQFERGKISHETD) are compositionally biased toward basic and acidic residues. Residues 351–360 (QQAAAEESPQ) show a composition bias toward low complexity. Pro residues predominate over residues 361–371 (ANPPPPPPPRP). Positions 400-450 (ETTKTAENADENNASRKLSIRQNIKRLRKSIKRPSKIKSKAAAPVPDSDEE) are phospho-regulated basic and hydrophobic (PRBH) motif. Basic residues predominate over residues 422 to 438 (NIKRLRKSIKRPSKIKS). Residues 494-505 (VAKEPEELETKA) show a composition bias toward basic and acidic residues. The segment covering 545-560 (RNANNQNATTSKQPKP) has biased composition (polar residues). Composition is skewed to polar residues over residues 732–742 (SGPQKSMSYSP) and 856–867 (RVQSPQIGNSRE). The segment covering 872–891 (QEEEDKEAERDSEEEEEERD) has biased composition (acidic residues). 2 stretches are compositionally biased toward pro residues: residues 898–910 (SESPPPPPLPQRR) and 925–939 (VPPPLPVSKPPPPPS). The span at 940-968 (VETIPSVASLPSPAPVTRSMAQRSASMSR) shows a compositional bias: low complexity. The segment covering 1075–1085 (QSDQSDQSAHQ) has biased composition (polar residues). A compositionally biased stretch (basic and acidic residues) spans 1086–1095 (EITDTRKTKS). Over residues 1102 to 1111 (RQNSNCSRSE) the composition is skewed to polar residues. 2 stretches are compositionally biased toward low complexity: residues 1114–1149 (SPLSFPSSRRSSTPTNLNANSNSNPNPSTNPNQNPS) and 1179–1195 (SYYSISPSGSSRYVVEI).

Post-translationally, phosphorylated by aPKC which lowers lipid affinity and promotes dissociation from the cell cortex. In the photoreceptor cells, aPKC-mediated phosphorylation leads to its displacement from the stalk apical cortex and thus restricts its localization to the rhabdomeric apical cortex where it functions. Dephosphorylation appears to be light-dependent. In terms of tissue distribution, restricted to photoreceptor cells (at protein level). Not detected until approximately 48hrs after puparium formation (APF) and then maintained in the photoreceptor cells post-eclosion (at protein level).

The protein localises to the cytoplasm. Its subcellular location is the cell cortex. It localises to the cytosol. It is found in the cell projection. The protein resides in the rhabdomere. Required for the morphological differentiation and maintenance of the rhabdomeric photoreceptor apical domain. Acts as a downstream component of the gl and Pph13 transcriptional pathway which is required for photoreceptor cell development. Likely to function by regulating the trafficking or retention of rhabdomeric proteins including the phototransduction proteins ninaE and didum. The polypeptide is Protein PIP82 (Drosophila melanogaster (Fruit fly)).